A 120-amino-acid polypeptide reads, in one-letter code: NAD(P)H-quinone oxidoreductase subunit 3, chloroplastic (120 aa).

3 helical membrane-spanning segments follow: residues 7-27 (YQTF…ALLI), 64-84 (SFAL…PWAM), and 89-109 (LGIF…IGLV).

It belongs to the complex I subunit 3 family. As to quaternary structure, NDH is composed of at least 16 different subunits, 5 of which are encoded in the nucleus.

The protein resides in the plastid. It localises to the chloroplast thylakoid membrane. The enzyme catalyses a plastoquinone + NADH + (n+1) H(+)(in) = a plastoquinol + NAD(+) + n H(+)(out). It catalyses the reaction a plastoquinone + NADPH + (n+1) H(+)(in) = a plastoquinol + NADP(+) + n H(+)(out). In terms of biological role, NDH shuttles electrons from NAD(P)H:plastoquinone, via FMN and iron-sulfur (Fe-S) centers, to quinones in the photosynthetic chain and possibly in a chloroplast respiratory chain. The immediate electron acceptor for the enzyme in this species is believed to be plastoquinone. Couples the redox reaction to proton translocation, and thus conserves the redox energy in a proton gradient. In Psilotum nudum (Whisk fern), this protein is NAD(P)H-quinone oxidoreductase subunit 3, chloroplastic.